Reading from the N-terminus, the 286-residue chain is Bifunctional protein FolD (286 aa).

Residues 165–167 and serine 190 contribute to the NADP(+) site; that span reads GRS.

The protein belongs to the tetrahydrofolate dehydrogenase/cyclohydrolase family. In terms of assembly, homodimer.

The catalysed reaction is (6R)-5,10-methylene-5,6,7,8-tetrahydrofolate + NADP(+) = (6R)-5,10-methenyltetrahydrofolate + NADPH. The enzyme catalyses (6R)-5,10-methenyltetrahydrofolate + H2O = (6R)-10-formyltetrahydrofolate + H(+). It participates in one-carbon metabolism; tetrahydrofolate interconversion. Functionally, catalyzes the oxidation of 5,10-methylenetetrahydrofolate to 5,10-methenyltetrahydrofolate and then the hydrolysis of 5,10-methenyltetrahydrofolate to 10-formyltetrahydrofolate. This Staphylococcus aureus (strain JH9) protein is Bifunctional protein FolD.